A 101-amino-acid chain; its full sequence is ATP-dependent Clp protease adapter protein ClpS (101 aa).

The protein belongs to the ClpS family. In terms of assembly, binds to the N-terminal domain of the chaperone ClpA.

In terms of biological role, involved in the modulation of the specificity of the ClpAP-mediated ATP-dependent protein degradation. The protein is ATP-dependent Clp protease adapter protein ClpS of Treponema denticola (strain ATCC 35405 / DSM 14222 / CIP 103919 / JCM 8153 / KCTC 15104).